We begin with the raw amino-acid sequence, 288 residues long: Sulfur carrier protein FdhD (288 aa).

The disordered stretch occupies residues 1–23 (MMRCMQSPEVHPAAAGDAEPPTH). Cys127 serves as the catalytic Cysteine persulfide intermediate.

It belongs to the FdhD family.

The protein localises to the cytoplasm. In terms of biological role, required for formate dehydrogenase (FDH) activity. Acts as a sulfur carrier protein that transfers sulfur from IscS to the molybdenum cofactor prior to its insertion into FDH. The chain is Sulfur carrier protein FdhD from Cupriavidus necator (strain ATCC 17699 / DSM 428 / KCTC 22496 / NCIMB 10442 / H16 / Stanier 337) (Ralstonia eutropha).